The chain runs to 114 residues: Protein preY, mitochondrial (114 aa).

Residues 1–35 constitute a mitochondrion transit peptide; it reads MLSGARCRLASALRGTRAPPSAVARRCLHASGSRP. The tract at residues 14–49 is disordered; the sequence is RGTRAPPSAVARRCLHASGSRPLADRGKKTEEPPRD. The segment covering 36-49 has biased composition (basic and acidic residues); sequence LADRGKKTEEPPRD. In terms of domain architecture, TRM112 spans 51 to 97; sequence DPALLEFLVCPLSKKPLRYEASTNELINEELGIAYPIIDGIPNMIPQ.

It belongs to the PREY family. Interacts (via TRM112 domain) with NDUFAF5; the interaction is direct and stabilizes NDUFAF5 protein. Interacts with COQ5; the interaction is direct, stabilizes COQ5 protein and associates PYURF with COQ enzyme complex.

The protein localises to the mitochondrion. In mitochondria, S-adenosylmethionine-dependent methyltransferase chaperone that supports both coenzyme Q biosynthesis, by stabilizing its components, such as COQ5, and NADH:ubiquinone oxidoreductase complex (complex I, MT-ND1) assembly, by stabilizing complex I assembly factors, such as NDUFAF5. The protein is Protein preY, mitochondrial of Homo sapiens (Human).